Here is a 145-residue protein sequence, read N- to C-terminus: uncharacterized protein (145 aa).

A signal peptide spans Met-1–Ala-29. A coiled-coil region spans residues Lys-67–Leu-101.

This is an uncharacterized protein from Bacillus subtilis (strain 168).